The chain runs to 452 residues: Bifunctional protein GlmU (452 aa).

The segment at 1–226 (MAFSVVVLAA…AVEVEGVNNR (226 aa)) is pyrophosphorylase. Residues 8–11 (LAAG), Lys-22, Gln-73, and 78–79 (GT) contribute to the UDP-N-acetyl-alpha-D-glucosamine site. A Mg(2+)-binding site is contributed by Asp-102. UDP-N-acetyl-alpha-D-glucosamine contacts are provided by Gly-137, Glu-151, Asn-166, and Asn-224. Asn-224 is a binding site for Mg(2+). A linker region spans residues 227 to 247 (LQLANLERALQNRQADELMTN). The segment at 248–452 (GVTLLDPSRF…IPNWPRPTKK (205 aa)) is N-acetyltransferase. The UDP-N-acetyl-alpha-D-glucosamine site is built by Arg-330 and Lys-348. His-360 functions as the Proton acceptor in the catalytic mechanism. Tyr-363 and Asn-374 together coordinate UDP-N-acetyl-alpha-D-glucosamine. Acetyl-CoA contacts are provided by residues Ala-377, 383 to 384 (NY), Ser-402, Ala-420, and Arg-437.

This sequence in the N-terminal section; belongs to the N-acetylglucosamine-1-phosphate uridyltransferase family. It in the C-terminal section; belongs to the transferase hexapeptide repeat family. In terms of assembly, homotrimer. Requires Mg(2+) as cofactor.

The protein resides in the cytoplasm. It catalyses the reaction alpha-D-glucosamine 1-phosphate + acetyl-CoA = N-acetyl-alpha-D-glucosamine 1-phosphate + CoA + H(+). The catalysed reaction is N-acetyl-alpha-D-glucosamine 1-phosphate + UTP + H(+) = UDP-N-acetyl-alpha-D-glucosamine + diphosphate. It functions in the pathway nucleotide-sugar biosynthesis; UDP-N-acetyl-alpha-D-glucosamine biosynthesis; N-acetyl-alpha-D-glucosamine 1-phosphate from alpha-D-glucosamine 6-phosphate (route II): step 2/2. Its pathway is nucleotide-sugar biosynthesis; UDP-N-acetyl-alpha-D-glucosamine biosynthesis; UDP-N-acetyl-alpha-D-glucosamine from N-acetyl-alpha-D-glucosamine 1-phosphate: step 1/1. The protein operates within bacterial outer membrane biogenesis; LPS lipid A biosynthesis. Catalyzes the last two sequential reactions in the de novo biosynthetic pathway for UDP-N-acetylglucosamine (UDP-GlcNAc). The C-terminal domain catalyzes the transfer of acetyl group from acetyl coenzyme A to glucosamine-1-phosphate (GlcN-1-P) to produce N-acetylglucosamine-1-phosphate (GlcNAc-1-P), which is converted into UDP-GlcNAc by the transfer of uridine 5-monophosphate (from uridine 5-triphosphate), a reaction catalyzed by the N-terminal domain. This chain is Bifunctional protein GlmU, found in Alteromonas mediterranea (strain DSM 17117 / CIP 110805 / LMG 28347 / Deep ecotype).